The chain runs to 133 residues: Salmonella pathogenicity island 2 protein C (133 aa).

Interacts with the mammalian NIPSNAP3A and HOOK3 proteins in infected cells.

The protein resides in the secreted. The protein localises to the cytoplasm. Its function is as follows. Virulence protein that plays a central role in mammalian macrophage infection, by inhibiting phagosome-lysosome fusion and cellular trafficking, including trafficking of organelles that are devoid of Salmonella. May act by disrupting the function of the mammalian HOOK3 protein, a protein involved in the cellular traffic. Also required for actin ADP-ribosylase SpvB activity. This Salmonella typhimurium (strain 14028s / SGSC 2262) protein is Salmonella pathogenicity island 2 protein C (spiC).